We begin with the raw amino-acid sequence, 565 residues long: Alkaline nuclease (565 aa).

The protein belongs to the herpesviridae alkaline nuclease family. As to quaternary structure, interacts with major DNA-binding protein; this interaction increases the nuclease processivity of the alkaline exonuclease.

The protein resides in the host nucleus. It is found in the host cytoplasm. Its function is as follows. Plays a role in processing non linear or branched viral DNA intermediates in order to promote the production of mature packaged unit-length linear progeny viral DNA molecules. Exhibits endonuclease and exonuclease activities and accepts both double-stranded and single-stranded DNA as substrate. Exonuclease digestion of DNA is in the 5'-&gt; 3' direction and the products are 5'-monophosphate nucleosides. Additionally, forms a recombinase with the major DNA-binding protein, which displays strand exchange activity. The protein is Alkaline nuclease of Equus caballus (Horse).